We begin with the raw amino-acid sequence, 218 residues long: Phosphatidylserine decarboxylase proenzyme (218 aa).

The active-site Schiff-base intermediate with substrate; via pyruvic acid is Ser188. The residue at position 188 (Ser188) is a Pyruvic acid (Ser); by autocatalysis.

Belongs to the phosphatidylserine decarboxylase family. PSD-A subfamily. Heterodimer of a large membrane-associated beta subunit and a small pyruvoyl-containing alpha subunit. Pyruvate is required as a cofactor. Is synthesized initially as an inactive proenzyme. Formation of the active enzyme involves a self-maturation process in which the active site pyruvoyl group is generated from an internal serine residue via an autocatalytic post-translational modification. Two non-identical subunits are generated from the proenzyme in this reaction, and the pyruvate is formed at the N-terminus of the alpha chain, which is derived from the carboxyl end of the proenzyme. The post-translation cleavage follows an unusual pathway, termed non-hydrolytic serinolysis, in which the side chain hydroxyl group of the serine supplies its oxygen atom to form the C-terminus of the beta chain, while the remainder of the serine residue undergoes an oxidative deamination to produce ammonia and the pyruvoyl prosthetic group on the alpha chain.

The protein resides in the cell membrane. The catalysed reaction is a 1,2-diacyl-sn-glycero-3-phospho-L-serine + H(+) = a 1,2-diacyl-sn-glycero-3-phosphoethanolamine + CO2. It participates in phospholipid metabolism; phosphatidylethanolamine biosynthesis; phosphatidylethanolamine from CDP-diacylglycerol: step 2/2. Its function is as follows. Catalyzes the formation of phosphatidylethanolamine (PtdEtn) from phosphatidylserine (PtdSer). In Streptomyces coelicolor (strain ATCC BAA-471 / A3(2) / M145), this protein is Phosphatidylserine decarboxylase proenzyme.